Consider the following 406-residue polypeptide: LIM/homeobox protein Lhx2 (406 aa).

2 LIM zinc-binding domains span residues 53 to 105 and 115 to 168; these read CAGC…CKED and CARC…CRLH. Residues 250–270 are disordered; sequence DAEHLDRDQPYPSSQKTKRMR. The homeobox DNA-binding region spans 266–325; sequence TKRMRTSFKHHQLRTMKSYFAINHNPDAKDLKQLAQKTGLTKRVLQVWFQNARAKFRRNL. The Nuclear localization signal signature appears at 307–323; it reads KRVLQVWFQNARAKFRR. Polar residues predominate over residues 328–356; sequence QENTGVDKTSDATLQTGTPSGPASELSNA. Disordered stretches follow at residues 328–375 and 387–406; these read QENT…SPTL and GNLE…TNLF. Residues 357–375 are compositionally biased toward low complexity; it reads SLSPSSTPTTLTDLTSPTL. Residues 396 to 406 show a composition bias toward polar residues; it reads SPSQTTLTNLF.

Interacts (via LIM domains) with CITED2. Interacts with POU4F2 isoform 1.

Its subcellular location is the nucleus. Functionally, acts as a transcriptional activator. Stimulates the promoter of the alpha-glycoprotein gene. Transcriptional regulatory protein involved in the control of cell differentiation in developing lymphoid and neural cell types. This chain is LIM/homeobox protein Lhx2 (Lhx2), found in Mus musculus (Mouse).